Consider the following 79-residue polypeptide: D-alanyl carrier protein (79 aa).

The Carrier domain occupies 1 to 76; it reads MKEQIFDIIE…KIAARVQEKT (76 aa). S34 is modified (O-(pantetheine 4'-phosphoryl)serine).

Belongs to the DltC family. 4'-phosphopantetheine is transferred from CoA to a specific serine of apo-DCP.

The protein localises to the cytoplasm. It participates in cell wall biogenesis; lipoteichoic acid biosynthesis. Carrier protein involved in the D-alanylation of lipoteichoic acid (LTA). The loading of thioester-linked D-alanine onto DltC is catalyzed by D-alanine--D-alanyl carrier protein ligase DltA. The DltC-carried D-alanyl group is further transferred to cell membrane phosphatidylglycerol (PG) by forming an ester bond, probably catalyzed by DltD. D-alanylation of LTA plays an important role in modulating the properties of the cell wall in Gram-positive bacteria, influencing the net charge of the cell wall. This is D-alanyl carrier protein from Lactococcus lactis subsp. cremoris (strain SK11).